Reading from the N-terminus, the 229-residue chain is NAD-dependent protein deacetylase (229 aa).

The 229-residue stretch at 1-229 folds into the Deacetylase sirtuin-type domain; that stretch reads MNKLNEALKK…SDAVKVFEEI (229 aa). Positions 20, 32, 96, 98, 99, 114, 181, 182, 205, and 223 each coordinate NAD(+). Nicotinamide contacts are provided by Ile98 and Asp99. His114 (proton acceptor) is an active-site residue.

It belongs to the sirtuin family. Class U subfamily.

It is found in the cytoplasm. It carries out the reaction N(6)-acetyl-L-lysyl-[protein] + NAD(+) + H2O = 2''-O-acetyl-ADP-D-ribose + nicotinamide + L-lysyl-[protein]. Its function is as follows. NAD-dependent protein deacetylase which modulates the activities of several enzymes which are inactive in their acetylated form. This chain is NAD-dependent protein deacetylase, found in Listeria monocytogenes serovar 1/2a (strain ATCC BAA-679 / EGD-e).